The following is a 256-amino-acid chain: Vesicle-associated protein 1-1 (256 aa).

M1 is subject to N-acetylmethionine. Residues 1–232 lie on the Cytoplasmic side of the membrane; that stretch reads MSNIDLIGMS…RRESKKSQSG (232 aa). At S2 the chain carries N-acetylserine; in Vesicle-associated protein 1-1, N-terminally processed. The MSP domain occupies 22–142; it reads LLTVEPLDLQ…EETKLRVTYV (121 aa). The disordered stretch occupies residues 142 to 169; it reads VAPPRPPSPVHEGSEEGSSPRASVSDNG. Residue S149 is modified to Phosphoserine. Over residues 157 to 169 the composition is skewed to polar residues; it reads EGSSPRASVSDNG. A coiled-coil region spans residues 187-232; it reads HQENTSEARALITKLTEEKQSAIQLNNRLQRELDQLRRESKKSQSG. Residues 233–253 traverse the membrane as a helical; Anchor for type IV membrane protein segment; the sequence is GIPFMYVLLVGLIGLILGYIM.

It belongs to the VAMP-associated protein (VAP) (TC 9.B.17) family. Homodimer or homooligomer. Interacts with the cowpea mosaic virus (CPMV) NTP-binding protein (NTB). Interacts with NET3C.

The protein resides in the endoplasmic reticulum membrane. Its subcellular location is the protein storage vacuole membrane. In terms of biological role, part of a membrane-cytoskeletal adapter complex that forms a bridge between the endoplasmic reticulum and the plasma membrane. Associates with microtubules. This chain is Vesicle-associated protein 1-1 (PVA11), found in Arabidopsis thaliana (Mouse-ear cress).